Consider the following 485-residue polypeptide: Dipeptide and tripeptide permease C (485 aa).

The Cytoplasmic portion of the chain corresponds to 1-12 (MKTPSQPRAIYY). Residues 13-33 (IVAIQIWEYFSFYGMRALLIL) form a helical membrane-spanning segment. The Periplasmic portion of the chain corresponds to 34–46 (YLTHQLGFDDNHA). A helical membrane pass occupies residues 47–67 (ISLFSAYASLVYVTPILGGWL). The Cytoplasmic segment spans residues 68–70 (ADR). A helical membrane pass occupies residues 71–93 (LLGNRTAVIAGALLMTLGHVVLG). The Periplasmic segment spans residues 94–102 (IDTNSTFSL). A helical transmembrane segment spans residues 103 to 125 (YLALAIIICGYGLFKSNISCLLG). Over 126-140 (ELYDENDHRRDGGFS) the chain is Cytoplasmic. A helical transmembrane segment spans residues 141 to 161 (LLYAAGNIGSIAAPIACGLAA). Topologically, residues 162-164 (QWY) are periplasmic. Residues 165–185 (GWHVGFALAGGGMFIGLLIFL) traverse the membrane as a helical segment. The Cytoplasmic portion of the chain corresponds to 186-208 (SGHRHFQSTRSMDKKALTSVKFA). Residues 209–229 (LPVWSWLVVMLCLAPVFFTLL) traverse the membrane as a helical segment. Residues 230–234 (LENDW) lie on the Periplasmic side of the membrane. The helical transmembrane segment at 235-255 (SGYLLAIVCLIAAQIIARMMI) threads the bilayer. Over 256 to 262 (KFPEHRR) the chain is Cytoplasmic. Residues 263 to 283 (ALWQIVLLMFVGTLFWVLAQQ) form a helical membrane-spanning segment. The Periplasmic portion of the chain corresponds to 284–307 (GGSTISLFIDRFVNRQAFNIEVPT). The helical transmembrane segment at 308–328 (ALFQSVNAIAVMLAGVVLAWL) threads the bilayer. The Cytoplasmic portion of the chain corresponds to 329 to 340 (ASPESRGNSTLR). A helical transmembrane segment spans residues 341–361 (VWLKFAFGLLLMACGFMLLAF). Over 362 to 375 (DARHAAADGQASMG) the chain is Periplasmic. The helical transmembrane segment at 376–396 (VMISGLALMGFAELFIDPVAI) threads the bilayer. Residues 397 to 406 (AQITRLKMSG) lie on the Cytoplasmic side of the membrane. The chain crosses the membrane as a helical span at residues 407-427 (VLTGIYMLATGAVANWLAGVV). Over 428–446 (AQQTTESQISGMAIAAYQR) the chain is Periplasmic. The helical transmembrane segment at 447–467 (FFSQMGEWTLACVAIIVVLAF) threads the bilayer. Topologically, residues 468-485 (ATRFLFSTPTNMIQESND) are cytoplasmic.

It belongs to the major facilitator superfamily. Proton-dependent oligopeptide transporter (POT/PTR) (TC 2.A.17) family. In terms of assembly, monomer.

Its subcellular location is the cell inner membrane. Its function is as follows. Proton-dependent permease that transports di- and tripeptides. Shows significantly higher specificity towards dipeptides than tripeptides. Has a preference for dipeptides with a C-terminal Lys residue. Can bind Ala-Lys, Lys-Ala, Ala-Ala. Can also transport alanine and trialanine. The sequence is that of Dipeptide and tripeptide permease C from Escherichia coli (strain K12).